The primary structure comprises 354 residues: Hyaluronan and proteoglycan link protein 1 (354 aa).

Positions M1–A15 are excised as a propeptide. N-linked (GlcNAc...) asparagine glycosylation is found at N21 and N56. The 115-residue stretch at P38–V152 folds into the Ig-like V-type domain. Disulfide bonds link C61–C139, C181–C252, C205–C226, C279–C349, and C304–C325. Link domains follow at residues V159–T254 and G259–R351.

It belongs to the HAPLN family. As to expression, widely expressed. Weakly expressed in the brain.

It is found in the secreted. The protein resides in the extracellular space. The protein localises to the extracellular matrix. Stabilizes the aggregates of proteoglycan monomers with hyaluronic acid in the extracellular cartilage matrix. This chain is Hyaluronan and proteoglycan link protein 1 (HAPLN1), found in Homo sapiens (Human).